Consider the following 271-residue polypeptide: Glutamate 5-kinase (271 aa).

Position 14 (K14) interacts with ATP. 3 residues coordinate substrate: S54, D141, and N157. Residues 177–178 and 219–225 each bind ATP; these read SD and TGGMSSK.

Belongs to the glutamate 5-kinase family.

It localises to the cytoplasm. It catalyses the reaction L-glutamate + ATP = L-glutamyl 5-phosphate + ADP. It functions in the pathway amino-acid biosynthesis; L-proline biosynthesis; L-glutamate 5-semialdehyde from L-glutamate: step 1/2. Catalyzes the transfer of a phosphate group to glutamate to form L-glutamate 5-phosphate. The polypeptide is Glutamate 5-kinase (Enterococcus faecalis (strain ATCC 700802 / V583)).